A 135-amino-acid polypeptide reads, in one-letter code: Galectin-1 (135 aa).

Residue Ala2 is modified to N-acetylalanine. Residues 4-135 form the Galectin domain; it reads GLVASNLNLK…DFKIKCVAFE (132 aa). An N6-acetyllysine mark is found at Lys13 and Lys29. The residue at position 30 (Ser30) is a Phosphoserine. A beta-D-galactoside is bound by residues 45 to 49, His53, Asn62, and 69 to 72; these read HFNPR and WGAE. The residue at position 108 (Lys108) is an N6-acetyllysine; alternate. Lys108 carries the N6-succinyllysine; alternate modification. Lys128 carries the post-translational modification N6-acetyllysine.

In terms of assembly, homodimer. Binds LGALS3BP. Interacts with CD2, CD3, CD4, CD6, CD7, CD43, ALCAM and CD45. Interacts with laminin (via poly-N-acetyllactosamine). Interacts with SUSD2. Interacts with cargo receptor TMED10; the interaction mediates the translocation from the cytoplasm into the ERGIC (endoplasmic reticulum-Golgi intermediate compartment) and thereby secretion.

It localises to the secreted. The protein resides in the extracellular space. Its subcellular location is the extracellular matrix. It is found in the cytoplasm. Functionally, lectin that binds beta-galactoside and a wide array of complex carbohydrates. Plays a role in regulating apoptosis, cell proliferation and cell differentiation. Inhibits CD45 protein phosphatase activity and therefore the dephosphorylation of Lyn kinase. Strong inducer of T-cell apoptosis. Has hemagglutinating activity towards human erythrocytes. The polypeptide is Galectin-1 (Capra hircus (Goat)).